Reading from the N-terminus, the 344-residue chain is 4-hydroxy-2-oxovalerate aldolase (344 aa).

The Pyruvate carboxyltransferase domain occupies Val8 to Met260. Residue Arg16–Asp17 coordinates substrate. Residue Asp17 participates in Mn(2+) binding. His20 functions as the Proton acceptor in the catalytic mechanism. Ser170 and His199 together coordinate substrate. 2 residues coordinate Mn(2+): His199 and His201. Tyr290 provides a ligand contact to substrate.

The protein belongs to the 4-hydroxy-2-oxovalerate aldolase family.

It carries out the reaction (S)-4-hydroxy-2-oxopentanoate = acetaldehyde + pyruvate. The sequence is that of 4-hydroxy-2-oxovalerate aldolase (mhpE) from Pseudoalteromonas translucida (strain TAC 125).